We begin with the raw amino-acid sequence, 290 residues long: Translin-associated protein X (290 aa).

Residues 1 to 34 (MNGKEGPGGFRKRKHDNFPHNQRREGKDASSSSP) are disordered. Positions 16 to 28 (DNFPHNQRREGKD) are enriched in basic and acidic residues. The interval 73–208 (LLHRITSAPD…MRMCINSVGN (136 aa)) is interaction with C1D. Mg(2+) contacts are provided by Glu129 and Glu197. Lys279 is covalently cross-linked (Glycyl lysine isopeptide (Lys-Gly) (interchain with G-Cter in SUMO2)).

Belongs to the translin family. As to quaternary structure, ring-shaped heterooctamer of six TSN and two TSNAX subunits. Interacts with GOLGA3, TSNAXIP1, SUN1 and AKAP9. Interacts with the homodimeric form of C1D following gamma-radiation. Interacts with TSN and C1D in a mutually exclusive manner. Post-translationally, sumoylated with SUMO1. Detected in cerebellum.

The protein resides in the cytoplasm. It is found in the perinuclear region. The protein localises to the golgi apparatus. It localises to the nucleus. Acts in combination with TSN as an endonuclease involved in the activation of the RNA-induced silencing complex (RISC). Possible role in spermatogenesis. The chain is Translin-associated protein X (Tsnax) from Rattus norvegicus (Rat).